The primary structure comprises 212 residues: Methylthioribulose-1-phosphate dehydratase (212 aa).

Residues His-97 and His-99 each contribute to the Zn(2+) site.

This sequence belongs to the aldolase class II family. MtnB subfamily. As to quaternary structure, homotetramer. Zn(2+) is required as a cofactor.

The catalysed reaction is 5-(methylsulfanyl)-D-ribulose 1-phosphate = 5-methylsulfanyl-2,3-dioxopentyl phosphate + H2O. It participates in amino-acid biosynthesis; L-methionine biosynthesis via salvage pathway; L-methionine from S-methyl-5-thio-alpha-D-ribose 1-phosphate: step 2/6. Functionally, catalyzes the dehydration of methylthioribulose-1-phosphate (MTRu-1-P) into 2,3-diketo-5-methylthiopentyl-1-phosphate (DK-MTP-1-P). The protein is Methylthioribulose-1-phosphate dehydratase of Bacillus cereus (strain ATCC 10987 / NRS 248).